The following is a 483-amino-acid chain: Bromoperoxidase-catalase (483 aa).

Residues 1-24 (MTQGPLTTEAGAPVADNQNSETAG) are disordered. Residues His54 and Asn127 contribute to the active site. Tyr337 is a binding site for heme.

The protein belongs to the catalase family.

The catalysed reaction is 2 H2O2 = O2 + 2 H2O. This Streptomyces venezuelae (strain ATCC 10712 / CBS 650.69 / DSM 40230 / JCM 4526 / NBRC 13096 / PD 04745) protein is Bromoperoxidase-catalase (bca).